Here is a 447-residue protein sequence, read N- to C-terminus: Na(+)-translocating NADH-quinone reductase subunit A (447 aa).

Belongs to the NqrA family. In terms of assembly, composed of six subunits; NqrA, NqrB, NqrC, NqrD, NqrE and NqrF.

It catalyses the reaction a ubiquinone + n Na(+)(in) + NADH + H(+) = a ubiquinol + n Na(+)(out) + NAD(+). Its function is as follows. NQR complex catalyzes the reduction of ubiquinone-1 to ubiquinol by two successive reactions, coupled with the transport of Na(+) ions from the cytoplasm to the periplasm. NqrA to NqrE are probably involved in the second step, the conversion of ubisemiquinone to ubiquinol. This chain is Na(+)-translocating NADH-quinone reductase subunit A, found in Neisseria meningitidis serogroup C / serotype 2a (strain ATCC 700532 / DSM 15464 / FAM18).